Reading from the N-terminus, the 101-residue chain is NADH-quinone oxidoreductase subunit K (101 aa).

3 helical membrane passes run 4 to 24 (LAHFLVLGAILFAISIVGIFL), 30 to 50 (IVLLMAIELMLLAVNINFVAF), and 61 to 81 (VFVFFILTVAAAESAIGLAIL).

This sequence belongs to the complex I subunit 4L family. In terms of assembly, NDH-1 is composed of 14 different subunits. Subunits NuoA, H, J, K, L, M, N constitute the membrane sector of the complex.

It is found in the cell inner membrane. The enzyme catalyses a quinone + NADH + 5 H(+)(in) = a quinol + NAD(+) + 4 H(+)(out). In terms of biological role, NDH-1 shuttles electrons from NADH, via FMN and iron-sulfur (Fe-S) centers, to quinones in the respiratory chain. The immediate electron acceptor for the enzyme in this species is believed to be ubiquinone. Couples the redox reaction to proton translocation (for every two electrons transferred, four hydrogen ions are translocated across the cytoplasmic membrane), and thus conserves the redox energy in a proton gradient. This Cupriavidus necator (strain ATCC 17699 / DSM 428 / KCTC 22496 / NCIMB 10442 / H16 / Stanier 337) (Ralstonia eutropha) protein is NADH-quinone oxidoreductase subunit K.